Reading from the N-terminus, the 160-residue chain is Epithelial membrane protein 1 (160 aa).

A helical transmembrane segment spans residues 1 to 21 (MLVLLAGLFVVHIATAIMLFV). Asn-43 carries N-linked (GlcNAc...) asparagine glycosylation. Transmembrane regions (helical) follow at residues 67 to 87 (FMIL…FQLF), 95 to 115 (FFLS…GVSI), and 137 to 157 (FILT…YMVL).

The protein belongs to the PMP-22/EMP/MP20 family. In terms of tissue distribution, most prominently found in the gastrointestinal tract, skin, lung, and brain but not in liver.

The protein localises to the membrane. This chain is Epithelial membrane protein 1 (Emp1), found in Rattus norvegicus (Rat).